A 423-amino-acid polypeptide reads, in one-letter code: Adenylosuccinate synthetase (423 aa).

GTP-binding positions include 12-18 (GDEGKGK) and 40-42 (GHT). Residue D13 is the Proton acceptor of the active site. Mg(2+) is bound by residues D13 and G40. Residues 13–16 (DEGK), 38–41 (NAGH), T128, R142, Q223, T238, and R302 contribute to the IMP site. H41 functions as the Proton donor in the catalytic mechanism. Substrate is bound at residue 298–304 (TTTGRPR). GTP contacts are provided by residues R304, 330 to 332 (RLD), and 412 to 414 (CIG).

Belongs to the adenylosuccinate synthetase family. In terms of assembly, homodimer. It depends on Mg(2+) as a cofactor.

The protein localises to the cytoplasm. It carries out the reaction IMP + L-aspartate + GTP = N(6)-(1,2-dicarboxyethyl)-AMP + GDP + phosphate + 2 H(+). It participates in purine metabolism; AMP biosynthesis via de novo pathway; AMP from IMP: step 1/2. Its function is as follows. Plays an important role in the de novo pathway of purine nucleotide biosynthesis. Catalyzes the first committed step in the biosynthesis of AMP from IMP. This chain is Adenylosuccinate synthetase, found in Dehalococcoides mccartyi (strain ATCC BAA-2100 / JCM 16839 / KCTC 5957 / BAV1).